We begin with the raw amino-acid sequence, 138 residues long: Large-conductance mechanosensitive channel (138 aa).

Transmembrane regions (helical) follow at residues 15–35 (VDLA…NSIV), 38–58 (IIMP…MFIQ), and 80–100 (GNFI…FLVV).

It belongs to the MscL family. As to quaternary structure, homopentamer.

Its subcellular location is the cell inner membrane. Channel that opens in response to stretch forces in the membrane lipid bilayer. May participate in the regulation of osmotic pressure changes within the cell. In Brucella ovis (strain ATCC 25840 / 63/290 / NCTC 10512), this protein is Large-conductance mechanosensitive channel.